The following is a 137-amino-acid chain: Large ribosomal subunit protein uL16 (137 aa).

The disordered stretch occupies residues Met-1–Val-20. Basic residues predominate over residues Arg-7–Asn-17.

It belongs to the universal ribosomal protein uL16 family. As to quaternary structure, part of the 50S ribosomal subunit.

Functionally, binds 23S rRNA and is also seen to make contacts with the A and possibly P site tRNAs. This Coxiella burnetii (strain CbuK_Q154) (Coxiella burnetii (strain Q154)) protein is Large ribosomal subunit protein uL16.